The primary structure comprises 203 residues: Outer-membrane lipoprotein LolB (203 aa).

An N-terminal signal peptide occupies residues 1–16; it reads MKTFLPCLFFLLILVG. The N-palmitoyl cysteine moiety is linked to residue cysteine 17. Cysteine 17 is lipidated: S-diacylglycerol cysteine.

This sequence belongs to the LolB family. Monomer.

The protein localises to the cell outer membrane. Plays a critical role in the incorporation of lipoproteins in the outer membrane after they are released by the LolA protein. The sequence is that of Outer-membrane lipoprotein LolB from Psychromonas ingrahamii (strain DSM 17664 / CCUG 51855 / 37).